Reading from the N-terminus, the 646-residue chain is Macrolide export ATP-binding/permease protein MacB (646 aa).

The ABC transporter domain occupies 5–243 (IELKGVSRTY…TLPKTNRIRQ (239 aa)). 41-48 (GASGSGKS) is an ATP binding site. Transmembrane regions (helical) follow at residues 272-292 (TLTM…VALG), 518-538 (FSIL…IGVM), 570-590 (IIEA…LSYI), and 611-631 (AAVA…YLPA).

The protein belongs to the ABC transporter superfamily. Macrolide exporter (TC 3.A.1.122) family. As to quaternary structure, homodimer. Part of the tripartite efflux system MacAB-TolC, which is composed of an inner membrane transporter, MacB, a periplasmic membrane fusion protein, MacA, and an outer membrane component, TolC. The complex forms a large protein conduit and can translocate molecules across both the inner and outer membranes. Interacts with MacA.

The protein localises to the cell inner membrane. In terms of biological role, part of the tripartite efflux system MacAB-TolC. MacB is a non-canonical ABC transporter that contains transmembrane domains (TMD), which form a pore in the inner membrane, and an ATP-binding domain (NBD), which is responsible for energy generation. Confers resistance against macrolides. In Escherichia coli, this protein is Macrolide export ATP-binding/permease protein MacB.